Here is a 340-residue protein sequence, read N- to C-terminus: MFPALQKIVVSTNASPLVGRELASNSTWIWHVERLPMLLGIPTVILSLTPAVLRLLIKPLLFVPIRYSSFVLTRLITPVLKEDMLEFESTADKKSPAGPKAKGKLALTSWLLSRYPASLKDRMSQLIRDYLAITFESTPSTSGVLFYILIELAAAPELAEAVRRELREVAPNGELPSTHLNELKVMDSVMRESARVNPFSHLVLYRKLLRPLKLEGCPELPAGCFICVDAHHIDFSPQLWENPERFDGLRHYRARQKPENGNRFKFANLGSDAPGWGDGPQACPGRMFADNTIKIILAHILTHYDLELPPGQGKPEKGSMPNGSMSPDTKAKVLFRSRKL.

Asparagine 25 is a glycosylation site (N-linked (GlcNAc...) asparagine). The helical transmembrane segment at 37–57 threads the bilayer; sequence MLLGIPTVILSLTPAVLRLLI. Residue cysteine 283 participates in heme binding. The interval 308–340 is disordered; sequence LPPGQGKPEKGSMPNGSMSPDTKAKVLFRSRKL. The N-linked (GlcNAc...) asparagine glycan is linked to asparagine 322.

It belongs to the cytochrome P450 family. It depends on heme as a cofactor.

The protein resides in the membrane. It participates in secondary metabolite biosynthesis. In terms of biological role, cytochrome P450 monooxygenase; part of the gene cluster that mediates the biosynthesis of chaetoglobosin A which has a unique inhibitory activity against actin polymerization in mammalian cells. Chaetoglobosin A and its intermediates are involved in the morphological differentiation of C.globosum. The first step of the pathway is the synthesis of prochaetoglobosin I via condensation of one acetyl-CoA, 8 malonyl-CoA, and a L-tryptophan molecule by the PKS-NRPS hybrid synthetase cheA, followed by reduction of backbone double bond to install desired geometry by the enoyl reductase cheB. Further multiple oxidation steps performed by the cytochrome P450 monooxygenases cheE and cheG, as well as by the FAD-linked oxidoreductase cheF, lead to the formation of chaetoglobosin A. Depending on the order of action of these reductases, distinct intermediates can be identified. Within the pathway, the cytochrome P450 monooxygenase cheE catalyzes a stereospecific epoxidation on prochaetoglobosin I, cytoglobosin D, and chaetoglobosin J intermediates. The FAD-linked oxidoreductase cheF performs dehydrogenation of the C-20 hydroxyl groups in the 20-dihyrochaetoglobosin A and cytoglobosin D intermediates. Finally, the cytochrome P450 monooxygenase cheG can catalyze the stereospecific dihydroxylation of prochaetoglobosin I and prochaetoglobosin IV at C-19 and C-20, respectively. The Diels-Alderase cheD may play a role in the post-PKS-NRPS biosynthetic steps catalyzing Diels-Alder cyclization. The sequence is that of Cytochrome P450 monooxygenase cheG from Chaetomium globosum (strain ATCC 6205 / CBS 148.51 / DSM 1962 / NBRC 6347 / NRRL 1970) (Soil fungus).